Here is a 352-residue protein sequence, read N- to C-terminus: Holliday junction branch migration complex subunit RuvB (352 aa).

Residues 1-181 (MTDRIVGAAK…FGIPVRLHFY (181 aa)) are large ATPase domain (RuvB-L). ATP contacts are provided by residues L20, R21, G62, K65, T66, T67, 128–130 (EDF), R171, Y181, and R218. T66 contributes to the Mg(2+) binding site. The tract at residues 182 to 252 (EVAELEGIVR…AADKALQRLE (71 aa)) is small ATPAse domain (RuvB-S). The segment at 255–352 (ELGLDALDHR…FDGDEENGSA (98 aa)) is head domain (RuvB-H). DNA-binding residues include R291, R310, and R315.

This sequence belongs to the RuvB family. As to quaternary structure, homohexamer. Forms an RuvA(8)-RuvB(12)-Holliday junction (HJ) complex. HJ DNA is sandwiched between 2 RuvA tetramers; dsDNA enters through RuvA and exits via RuvB. An RuvB hexamer assembles on each DNA strand where it exits the tetramer. Each RuvB hexamer is contacted by two RuvA subunits (via domain III) on 2 adjacent RuvB subunits; this complex drives branch migration. In the full resolvosome a probable DNA-RuvA(4)-RuvB(12)-RuvC(2) complex forms which resolves the HJ.

It localises to the cytoplasm. It carries out the reaction ATP + H2O = ADP + phosphate + H(+). In terms of biological role, the RuvA-RuvB-RuvC complex processes Holliday junction (HJ) DNA during genetic recombination and DNA repair, while the RuvA-RuvB complex plays an important role in the rescue of blocked DNA replication forks via replication fork reversal (RFR). RuvA specifically binds to HJ cruciform DNA, conferring on it an open structure. The RuvB hexamer acts as an ATP-dependent pump, pulling dsDNA into and through the RuvAB complex. RuvB forms 2 homohexamers on either side of HJ DNA bound by 1 or 2 RuvA tetramers; 4 subunits per hexamer contact DNA at a time. Coordinated motions by a converter formed by DNA-disengaged RuvB subunits stimulates ATP hydrolysis and nucleotide exchange. Immobilization of the converter enables RuvB to convert the ATP-contained energy into a lever motion, pulling 2 nucleotides of DNA out of the RuvA tetramer per ATP hydrolyzed, thus driving DNA branch migration. The RuvB motors rotate together with the DNA substrate, which together with the progressing nucleotide cycle form the mechanistic basis for DNA recombination by continuous HJ branch migration. Branch migration allows RuvC to scan DNA until it finds its consensus sequence, where it cleaves and resolves cruciform DNA. The sequence is that of Holliday junction branch migration complex subunit RuvB from Parvibaculum lavamentivorans (strain DS-1 / DSM 13023 / NCIMB 13966).